We begin with the raw amino-acid sequence, 851 residues long: DNA mismatch repair protein MutS (851 aa).

Residue 602-609 (GPNMSGKS) participates in ATP binding.

Belongs to the DNA mismatch repair MutS family.

This protein is involved in the repair of mismatches in DNA. It is possible that it carries out the mismatch recognition step. This protein has a weak ATPase activity. The polypeptide is DNA mismatch repair protein MutS (Streptococcus pyogenes serotype M3 (strain SSI-1)).